Consider the following 481-residue polypeptide: Alkaline protease secretion protein AprF (481 aa).

The tract at residues 462 to 481 (PAPLHTLSKTDTEENRSALN) is disordered. Over residues 469 to 481 (SKTDTEENRSALN) the composition is skewed to basic and acidic residues.

It belongs to the outer membrane factor (OMF) (TC 1.B.17) family.

Its subcellular location is the cell outer membrane. Involved in the secretion of alkaline protease. The protein is Alkaline protease secretion protein AprF (aprF) of Pseudomonas aeruginosa (strain ATCC 15692 / DSM 22644 / CIP 104116 / JCM 14847 / LMG 12228 / 1C / PRS 101 / PAO1).